The sequence spans 98 residues: Class II hydrophobin 3 (98 aa).

The signal sequence occupies residues 1-18; it reads MQFTTTTLIAILSALAVA. Asn-26 and Asn-54 each carry an N-linked (GlcNAc...) asparagine glycan. Disulfide bonds link Cys-35/Cys-83, Cys-44/Cys-74, Cys-45/Cys-57, and Cys-84/Cys-95.

The protein belongs to the cerato-ulmin hydrophobin family.

It localises to the secreted. The protein resides in the cell wall. Aerial growth, conidiation, and dispersal of filamentous fungi in the environment rely upon a capability of their secreting small amphipathic proteins called hydrophobins (HPBs) with low sequence identity. Class I can self-assemble into an outermost layer of rodlet bundles on aerial cell surfaces, conferring cellular hydrophobicity that supports fungal growth, development and dispersal; whereas Class II form highly ordered films at water-air interfaces through intermolecular interactions but contribute nothing to the rodlet structure. In Botryotinia fuckeliana, hydrophobins are not involved in conferring surface hydrophobicity to conidia and aerial hyphae and their function in sclerotia and fruiting bodies remains to be investigated. This chain is Class II hydrophobin 3, found in Botryotinia fuckeliana (strain B05.10) (Noble rot fungus).